The following is a 162-amino-acid chain: Shikimate kinase (162 aa).

ATP is bound at residue 11 to 16; it reads GSGKSS. Ser-15 serves as a coordination point for Mg(2+). 3 residues coordinate substrate: Asp-33, Arg-57, and Gly-80. Position 116 (Arg-116) interacts with ATP. Arg-132 is a substrate binding site.

This sequence belongs to the shikimate kinase family. Monomer. It depends on Mg(2+) as a cofactor.

It localises to the cytoplasm. It carries out the reaction shikimate + ATP = 3-phosphoshikimate + ADP + H(+). It functions in the pathway metabolic intermediate biosynthesis; chorismate biosynthesis; chorismate from D-erythrose 4-phosphate and phosphoenolpyruvate: step 5/7. Its function is as follows. Catalyzes the specific phosphorylation of the 3-hydroxyl group of shikimic acid using ATP as a cosubstrate. The chain is Shikimate kinase from Helicobacter acinonychis (strain Sheeba).